The following is a 384-amino-acid chain: Tryptophan--tRNA ligase (384 aa).

The 'HIGH' region motif lies at Pro-81–His-89. The 'KMSKS' region motif lies at Lys-252–Ser-256.

Belongs to the class-I aminoacyl-tRNA synthetase family.

The protein localises to the cytoplasm. The catalysed reaction is tRNA(Trp) + L-tryptophan + ATP = L-tryptophyl-tRNA(Trp) + AMP + diphosphate + H(+). The protein is Tryptophan--tRNA ligase of Thermococcus onnurineus (strain NA1).